A 228-amino-acid polypeptide reads, in one-letter code: UPF0056 membrane protein MJ0972 (228 aa).

The next 5 helical transmembrane spans lie at 22 to 42, 68 to 88, 133 to 153, 163 to 183, and 201 to 221; these read FYIYGFVSLFITIDPIGLIPI, VVLLLFALFGNYIFGYFGITI, VPLAIPLISGPGAITTTMILI, GVVVLSILSAMLVSGIILSLT, and IMGLLLVAISVQIIFTGIVGL.

This sequence belongs to the UPF0056 (MarC) family.

It is found in the cell membrane. In Methanocaldococcus jannaschii (strain ATCC 43067 / DSM 2661 / JAL-1 / JCM 10045 / NBRC 100440) (Methanococcus jannaschii), this protein is UPF0056 membrane protein MJ0972.